We begin with the raw amino-acid sequence, 1484 residues long: Ral GTPase-activating protein subunit beta (1484 aa).

Disordered stretches follow at residues 355–437 (PRSD…APRR) and 697–728 (GGENNLKSHSRTNSGISSASGGSTEPTTPDSE). A Phosphoserine modification is found at Ser-359. 2 positions are modified to phosphothreonine: Thr-363 and Thr-379. 3 stretches are compositionally biased toward polar residues: residues 369–381 (SMPQSAAVNTTPP), 392–428 (NKATMKTSTVTTAHTSKVQHQASSTSPLSSPNQTSSE), and 701–725 (NLKSHSRTNSGISSASGGSTEPTTP). A phosphoserine mark is found at Ser-421 and Ser-710. Thr-724 carries the post-translational modification Phosphothreonine. The 245-residue stretch at 1138 to 1382 (IGYLDLLPCR…TTLEKEVPVI (245 aa)) folds into the Rap-GAP domain. At Ser-1275 the chain carries Phosphoserine. The segment at 1301-1325 (DSLNSSQRLSPSSRMKKLPQGRPVP) is disordered. A compositionally biased stretch (low complexity) spans 1302-1313 (SLNSSQRLSPSS).

As to quaternary structure, component of the heterodimeric RalGAP1 complex with RALGAPA1 and of the heterodimeric RalGAP2 complex with RALGAPA2. Heterodimerization is required for activity. Detected in brain, thymus, lung, heart, spleen, liver and testis (at protein level).

Non-catalytic subunit of the heterodimeric RalGAP1 and RalGAP2 complexes which act as GTPase activators for the Ras-like small GTPases RALA and RALB. This Rattus norvegicus (Rat) protein is Ral GTPase-activating protein subunit beta.